The chain runs to 416 residues: Probable intermembrane transport protein HI_1671 (416 aa).

8 helical membrane-spanning segments follow: residues 62–82 (ILIL…LLGI), 107–127 (IFIC…MLWL), 138–158 (VLLF…LVAL), 172–192 (EINI…LLFI), 263–283 (LIAG…GIYL), 306–326 (FVAF…IFIM), 347–367 (LLHL…VLAL), and 377–397 (IINF…FCTM).

Belongs to the PqiA family.

It is found in the cell inner membrane. The polypeptide is Probable intermembrane transport protein HI_1671 (Haemophilus influenzae (strain ATCC 51907 / DSM 11121 / KW20 / Rd)).